We begin with the raw amino-acid sequence, 160 residues long: Putative antiporter subunit mnhE2 (160 aa).

The next 3 helical transmembrane spans lie at 22–42 (HFKFSTFFSGYLIGLIVIYIL), 55–75 (IWVAIKFLGVYLYQLITSSIS), and 100–120 (SDWSITFLTILIIITPGSTVI).

It belongs to the CPA3 antiporters (TC 2.A.63) subunit E family. As to quaternary structure, may form a heterooligomeric complex that consists of seven subunits: mnhA2, mnhB2, mnhC2, mnhD2, mnhE2, mnhF2 and mnhG2.

Its subcellular location is the cell membrane. The protein is Putative antiporter subunit mnhE2 (mnhE2) of Staphylococcus aureus (strain USA300).